Here is a 386-residue protein sequence, read N- to C-terminus: MATTKSFLILFFMILATTSSTCAKLEKMVTVLSIDGGGIKGIIPAIILEFLEGQLQEVDNNKDARLADYFDVIGGTSTGGLLTAMITTPNENNRPFAAAKDIVPFYFEHGPHIFNYSGSIIGPMYDGKYLLQVLQEKLGETRVHQALTEVAISSFDIKTNKPVIFTKSNLAKSPELDAKMYDICYSTAAAPIYFPPHYFITHTSNGDIYEFNLVDGGVATVGDPALLSLSVATRLAQEDPAFSSIKSLDYKQMLLLSLGTGTNSEFDKTYTAQEAAKWGPLRWMLAIQQMTNAASSYMTDYYISTVFQARHSQNNYLRVQENALTGTTTEMDDASEANMELLVQVGETLLKKPVSKDSPETYEEALKRFAKLLSDRKKLRANKASY.

The N-terminal stretch at Met1–Ala23 is a signal peptide. The PNPLA domain occupies Leu32–Leu229. The GXGXXG signature appears at Gly36–Gly41. Positions Gly75–Gly79 match the GXSXG motif. Ser77 serves as the catalytic Nucleophile. N-linked (GlcNAc...) asparagine glycosylation occurs at Asn115. Asp215 serves as the catalytic Proton acceptor. The short motif at Asp215–Gly217 is the DGA/G element. Residues Glu321–Ala384 adopt a coiled-coil conformation.

The protein belongs to the patatin family. As to expression, tuber.

The protein localises to the vacuole. Its function is as follows. Probable lipolytic acyl hydrolase (LAH), an activity which is thought to be involved in the response of tubers to pathogens. The polypeptide is Patatin group M-2 (Solanum tuberosum (Potato)).